The following is a 355-amino-acid chain: RNA 3'-terminal phosphate cyclase (355 aa).

ATP-binding positions include Q100 and 300-304 (HLADQ). H325 functions as the Tele-AMP-histidine intermediate in the catalytic mechanism.

This sequence belongs to the RNA 3'-terminal cyclase family. Type 1 subfamily.

It localises to the cytoplasm. It catalyses the reaction a 3'-end 3'-phospho-ribonucleotide-RNA + ATP = a 3'-end 2',3'-cyclophospho-ribonucleotide-RNA + AMP + diphosphate. Its function is as follows. Catalyzes the conversion of 3'-phosphate to a 2',3'-cyclic phosphodiester at the end of RNA. The mechanism of action of the enzyme occurs in 3 steps: (A) adenylation of the enzyme by ATP; (B) transfer of adenylate to an RNA-N3'P to produce RNA-N3'PP5'A; (C) and attack of the adjacent 2'-hydroxyl on the 3'-phosphorus in the diester linkage to produce the cyclic end product. The biological role of this enzyme is unknown but it is likely to function in some aspects of cellular RNA processing. The protein is RNA 3'-terminal phosphate cyclase of Methanosarcina acetivorans (strain ATCC 35395 / DSM 2834 / JCM 12185 / C2A).